Consider the following 81-residue polypeptide: Photosystem I iron-sulfur center (81 aa).

4Fe-4S ferredoxin-type domains follow at residues 2 to 31 (SHSVKIYDTCIGCTQCVRACPTDVLEMIPW) and 39 to 68 (IASAPRTEDCVGCKRCESACPTDFLSVRVY). Residues Cys11, Cys14, Cys17, Cys21, Cys48, Cys51, Cys54, and Cys58 each contribute to the [4Fe-4S] cluster site.

The eukaryotic PSI reaction center is composed of at least 11 subunits. It depends on [4Fe-4S] cluster as a cofactor.

It localises to the plastid thylakoid membrane. The enzyme catalyses reduced [plastocyanin] + hnu + oxidized [2Fe-2S]-[ferredoxin] = oxidized [plastocyanin] + reduced [2Fe-2S]-[ferredoxin]. Apoprotein for the two 4Fe-4S centers FA and FB of photosystem I (PSI); essential for photochemical activity. FB is the terminal electron acceptor of PSI, donating electrons to ferredoxin. The C-terminus interacts with PsaA/B/D and helps assemble the protein into the PSI complex. Required for binding of PsaD and PsaE to PSI. PSI is a plastocyanin-ferredoxin oxidoreductase, converting photonic excitation into a charge separation, which transfers an electron from the donor P700 chlorophyll pair to the spectroscopically characterized acceptors A0, A1, FX, FA and FB in turn. This chain is Photosystem I iron-sulfur center, found in Cuscuta gronovii (Common dodder).